A 92-amino-acid polypeptide reads, in one-letter code: Small ribosomal subunit protein uS19 (92 aa).

The protein belongs to the universal ribosomal protein uS19 family.

In terms of biological role, protein S19 forms a complex with S13 that binds strongly to the 16S ribosomal RNA. The sequence is that of Small ribosomal subunit protein uS19 from Rickettsia bellii (strain OSU 85-389).